A 129-amino-acid polypeptide reads, in one-letter code: MPTINQLIRKERKKVIRKTKSPALLECPQRRGVCTRVYTTTPKKPNSALRKVAKVKLTSKVEVISYIPGEGHNLQEHSIVLVRGGRVKDLPGVKYHIIRGALDTAGVAKRNVSRSKYGAKKAKAGGDKK.

The residue at position 89 (aspartate 89) is a 3-methylthioaspartic acid.

The protein belongs to the universal ribosomal protein uS12 family. Part of the 30S ribosomal subunit. Contacts proteins S8 and S17. May interact with IF1 in the 30S initiation complex.

Its function is as follows. With S4 and S5 plays an important role in translational accuracy. Functionally, interacts with and stabilizes bases of the 16S rRNA that are involved in tRNA selection in the A site and with the mRNA backbone. Located at the interface of the 30S and 50S subunits, it traverses the body of the 30S subunit contacting proteins on the other side and probably holding the rRNA structure together. The combined cluster of proteins S8, S12 and S17 appears to hold together the shoulder and platform of the 30S subunit. The protein is Small ribosomal subunit protein uS12 of Helicobacter hepaticus (strain ATCC 51449 / 3B1).